A 159-amino-acid polypeptide reads, in one-letter code: SsrA-binding protein (159 aa).

The tract at residues 134-159 is disordered; the sequence is KEHDKRDTERDRDWSRDKERLMKHNA.

Belongs to the SmpB family.

The protein localises to the cytoplasm. Functionally, required for rescue of stalled ribosomes mediated by trans-translation. Binds to transfer-messenger RNA (tmRNA), required for stable association of tmRNA with ribosomes. tmRNA and SmpB together mimic tRNA shape, replacing the anticodon stem-loop with SmpB. tmRNA is encoded by the ssrA gene; the 2 termini fold to resemble tRNA(Ala) and it encodes a 'tag peptide', a short internal open reading frame. During trans-translation Ala-aminoacylated tmRNA acts like a tRNA, entering the A-site of stalled ribosomes, displacing the stalled mRNA. The ribosome then switches to translate the ORF on the tmRNA; the nascent peptide is terminated with the 'tag peptide' encoded by the tmRNA and targeted for degradation. The ribosome is freed to recommence translation, which seems to be the essential function of trans-translation. This chain is SsrA-binding protein, found in Marinomonas sp. (strain MWYL1).